The primary structure comprises 175 residues: Protein her-1 (175 aa).

A signal peptide spans 1–18; the sequence is MRYLPIFVFLGSFGYTET. Residues Asn98 and Asn163 are each glycosylated (N-linked (GlcNAc...) asparagine).

It is found in the secreted. Its function is as follows. Dictates male development. Probably plays a direct role in cell signaling during C.elegans sex determination. Inhibits the function of tra-2a. The protein is Protein her-1 (her-1) of Caenorhabditis elegans.